We begin with the raw amino-acid sequence, 125 residues long: Small ribosomal subunit protein uS12m (125 aa).

The tract at residues 1–50 (MPSLNQLIRHGREEKRRTDRTRALDQCPQKQGVCPRVSTRTPKKPNSAPR) is disordered. The segment covering 10 to 23 (HGREEKRRTDRTRA) has biased composition (basic and acidic residues).

This sequence belongs to the universal ribosomal protein uS12 family.

Its subcellular location is the mitochondrion. In terms of biological role, protein S12 is involved in the translation initiation step. This Petunia hybrida (Petunia) protein is Small ribosomal subunit protein uS12m (RPS12).